Reading from the N-terminus, the 178-residue chain is Large ribosomal subunit protein uL6 (178 aa).

This sequence belongs to the universal ribosomal protein uL6 family. As to quaternary structure, part of the 50S ribosomal subunit.

This protein binds to the 23S rRNA, and is important in its secondary structure. It is located near the subunit interface in the base of the L7/L12 stalk, and near the tRNA binding site of the peptidyltransferase center. The chain is Large ribosomal subunit protein uL6 from Corynebacterium diphtheriae (strain ATCC 700971 / NCTC 13129 / Biotype gravis).